A 370-amino-acid chain; its full sequence is Putative alanine racemase 2 (370 aa).

The Proton acceptor; specific for D-alanine role is filled by lysine 38. Position 38 is an N6-(pyridoxal phosphate)lysine (lysine 38). Tyrosine 266 (proton acceptor; specific for L-alanine) is an active-site residue.

Belongs to the alanine racemase family. Pyridoxal 5'-phosphate serves as cofactor.

The catalysed reaction is L-alanine = D-alanine. The protein is Putative alanine racemase 2 (alr2) of Schizosaccharomyces pombe (strain 972 / ATCC 24843) (Fission yeast).